The following is a 389-amino-acid chain: Tubulin-like protein CetZ3 (389 aa).

Residues 10-14 (QAGGK), 110-112 (GTG), E142, N169, and N187 each bind GTP.

The protein belongs to the CetZ family.

Its subcellular location is the cytoplasm. Involved in cell shape control. In Haloferax volcanii (strain ATCC 29605 / DSM 3757 / JCM 8879 / NBRC 14742 / NCIMB 2012 / VKM B-1768 / DS2) (Halobacterium volcanii), this protein is Tubulin-like protein CetZ3.